Consider the following 308-residue polypeptide: Probable plastid-lipid-associated protein 9, chloroplastic (308 aa).

The transit peptide at 1 to 55 (MALIQHGSVSGTSAVRLSFSSSVSPPSSSPPLSRVSLNFQSEKKSCYRRMICRAM) directs the protein to the chloroplast.

Belongs to the PAP/fibrillin family.

It localises to the plastid. The protein localises to the chloroplast. Its subcellular location is the plastoglobule. The polypeptide is Probable plastid-lipid-associated protein 9, chloroplastic (PAP9) (Arabidopsis thaliana (Mouse-ear cress)).